Consider the following 115-residue polypeptide: MARVKRGNVARKRRNKILRLARGFRGGNGTLFRTANQRVMKALCNAYRDRRRRKRDFRRLWIARINAAARLNGVSYSRLMGGLKKADVRLNRKMLAQLAVVDPGSFTNVVAAAKS.

It belongs to the bacterial ribosomal protein bL20 family.

Binds directly to 23S ribosomal RNA and is necessary for the in vitro assembly process of the 50S ribosomal subunit. It is not involved in the protein synthesizing functions of that subunit. This chain is Large ribosomal subunit protein bL20, found in Synechococcus sp. (strain CC9605).